Here is a 546-residue protein sequence, read N- to C-terminus: Glucose-6-phosphate isomerase (546 aa).

E355 acts as the Proton donor in catalysis. Active-site residues include H386 and K510.

It belongs to the GPI family.

The protein localises to the cytoplasm. It carries out the reaction alpha-D-glucose 6-phosphate = beta-D-fructose 6-phosphate. It participates in carbohydrate biosynthesis; gluconeogenesis. Its pathway is carbohydrate degradation; glycolysis; D-glyceraldehyde 3-phosphate and glycerone phosphate from D-glucose: step 2/4. In terms of biological role, catalyzes the reversible isomerization of glucose-6-phosphate to fructose-6-phosphate. The polypeptide is Glucose-6-phosphate isomerase (Buchnera aphidicola subsp. Cinara cedri (strain Cc)).